Consider the following 61-residue polypeptide: Large ribosomal subunit protein bL28 (61 aa).

Residues 1–21 are disordered; that stretch reads MAKDYVTGKKTTFGNKRSHAM.

The protein belongs to the bacterial ribosomal protein bL28 family.

The polypeptide is Large ribosomal subunit protein bL28 (Lactobacillus helveticus (strain DPC 4571)).